Reading from the N-terminus, the 441-residue chain is Alpha-monoglucosyldiacylglycerol synthase (441 aa).

It belongs to the glycosyltransferase group 1 family. Glycosyltransferase 4 subfamily. Requires Mg(2+) as cofactor.

The protein resides in the cell membrane. The catalysed reaction is a 1,2-diacyl-sn-glycerol + UDP-alpha-D-glucose = a 1,2-diacyl-3-O-(alpha-D-glucopyranosyl)-sn-glycerol + UDP + H(+). Activated by the negatively charged lipid phosphatidylglycerol (PG). Glucosyltransferase involved in the biosynthesis of the non-bilayer-prone membrane lipid alpha-monoglucosyldiacylglycerol. This is a major component for maintaining a certain anionic lipid surface charge density, for balancing the bilayer to non-bilayer phase equilibria and for keeping a constant lipid bilayer spontaneous curvature (curvature packing stress). Catalyzes the transfer of a glucosyl residue from UDP-Glc to diacylglycerol (DAG) acceptor to form the corresponding alpha-glucosyl-DAG (1,2-diacyl-3-O-(alpha-D-glucopyranosyl)-sn-glycerol). It can only use UDP-Glc as sugar donor. In Streptococcus pneumoniae (strain ATCC BAA-255 / R6), this protein is Alpha-monoglucosyldiacylglycerol synthase.